A 364-amino-acid polypeptide reads, in one-letter code: tRNA 2-selenouridine synthase (364 aa).

The Rhodanese domain maps to 14–137 (LIADTPIIDV…LRQTTIQATI (124 aa)). Residue Cys97 is the S-selanylcysteine intermediate of the active site.

The protein belongs to the SelU family. As to quaternary structure, monomer.

The enzyme catalyses 5-methylaminomethyl-2-thiouridine(34) in tRNA + selenophosphate + (2E)-geranyl diphosphate + H2O + H(+) = 5-methylaminomethyl-2-selenouridine(34) in tRNA + (2E)-thiogeraniol + phosphate + diphosphate. It carries out the reaction 5-methylaminomethyl-2-thiouridine(34) in tRNA + (2E)-geranyl diphosphate = 5-methylaminomethyl-S-(2E)-geranyl-thiouridine(34) in tRNA + diphosphate. The catalysed reaction is 5-methylaminomethyl-S-(2E)-geranyl-thiouridine(34) in tRNA + selenophosphate + H(+) = 5-methylaminomethyl-2-(Se-phospho)selenouridine(34) in tRNA + (2E)-thiogeraniol. It catalyses the reaction 5-methylaminomethyl-2-(Se-phospho)selenouridine(34) in tRNA + H2O = 5-methylaminomethyl-2-selenouridine(34) in tRNA + phosphate. In terms of biological role, involved in the post-transcriptional modification of the uridine at the wobble position (U34) of tRNA(Lys), tRNA(Glu) and tRNA(Gln). Catalyzes the conversion of 2-thiouridine (S2U-RNA) to 2-selenouridine (Se2U-RNA). Acts in a two-step process involving geranylation of 2-thiouridine (S2U) to S-geranyl-2-thiouridine (geS2U) and subsequent selenation of the latter derivative to 2-selenouridine (Se2U) in the tRNA chain. The protein is tRNA 2-selenouridine synthase of Escherichia coli O8 (strain IAI1).